The primary structure comprises 121 residues: Aspartate 1-decarboxylase (121 aa).

The Schiff-base intermediate with substrate; via pyruvic acid role is filled by Ser25. Position 25 is a pyruvic acid (Ser) (Ser25). Residue Thr57 participates in substrate binding. Tyr58 serves as the catalytic Proton donor. Residue 73 to 75 (GAA) participates in substrate binding.

It belongs to the PanD family. Heterooctamer of four alpha and four beta subunits. Requires pyruvate as cofactor. Is synthesized initially as an inactive proenzyme, which is activated by self-cleavage at a specific serine bond to produce a beta-subunit with a hydroxyl group at its C-terminus and an alpha-subunit with a pyruvoyl group at its N-terminus.

Its subcellular location is the cytoplasm. It carries out the reaction L-aspartate + H(+) = beta-alanine + CO2. The protein operates within cofactor biosynthesis; (R)-pantothenate biosynthesis; beta-alanine from L-aspartate: step 1/1. Functionally, catalyzes the pyruvoyl-dependent decarboxylation of aspartate to produce beta-alanine. In Sulfurimonas denitrificans (strain ATCC 33889 / DSM 1251) (Thiomicrospira denitrificans (strain ATCC 33889 / DSM 1251)), this protein is Aspartate 1-decarboxylase.